Consider the following 170-residue polypeptide: UPF0251 protein MA_1017 (170 aa).

It belongs to the UPF0251 family.

This chain is UPF0251 protein MA_1017, found in Methanosarcina acetivorans (strain ATCC 35395 / DSM 2834 / JCM 12185 / C2A).